Reading from the N-terminus, the 218-residue chain is Probable transaldolase (218 aa).

The Schiff-base intermediate with substrate role is filled by Lys83.

The protein belongs to the transaldolase family. Type 3B subfamily.

It localises to the cytoplasm. The enzyme catalyses D-sedoheptulose 7-phosphate + D-glyceraldehyde 3-phosphate = D-erythrose 4-phosphate + beta-D-fructose 6-phosphate. It functions in the pathway carbohydrate degradation; pentose phosphate pathway; D-glyceraldehyde 3-phosphate and beta-D-fructose 6-phosphate from D-ribose 5-phosphate and D-xylulose 5-phosphate (non-oxidative stage): step 2/3. Transaldolase is important for the balance of metabolites in the pentose-phosphate pathway. This Kosmotoga olearia (strain ATCC BAA-1733 / DSM 21960 / TBF 19.5.1) protein is Probable transaldolase.